We begin with the raw amino-acid sequence, 110 residues long: Large ribosomal subunit protein uL22 (110 aa).

It belongs to the universal ribosomal protein uL22 family. Part of the 50S ribosomal subunit.

Its function is as follows. This protein binds specifically to 23S rRNA; its binding is stimulated by other ribosomal proteins, e.g. L4, L17, and L20. It is important during the early stages of 50S assembly. It makes multiple contacts with different domains of the 23S rRNA in the assembled 50S subunit and ribosome. In terms of biological role, the globular domain of the protein is located near the polypeptide exit tunnel on the outside of the subunit, while an extended beta-hairpin is found that lines the wall of the exit tunnel in the center of the 70S ribosome. In Histophilus somni (strain 2336) (Haemophilus somnus), this protein is Large ribosomal subunit protein uL22.